We begin with the raw amino-acid sequence, 152 residues long: Deoxyuridine 5'-triphosphate nucleotidohydrolase (152 aa).

Residues 71 to 73, Asn-84, 88 to 90, and Met-98 contribute to the substrate site; these read RSG and LID.

The protein belongs to the dUTPase family. It depends on Mg(2+) as a cofactor.

It carries out the reaction dUTP + H2O = dUMP + diphosphate + H(+). The protein operates within pyrimidine metabolism; dUMP biosynthesis; dUMP from dCTP (dUTP route): step 2/2. This enzyme is involved in nucleotide metabolism: it produces dUMP, the immediate precursor of thymidine nucleotides and it decreases the intracellular concentration of dUTP so that uracil cannot be incorporated into DNA. The chain is Deoxyuridine 5'-triphosphate nucleotidohydrolase from Citrobacter koseri (strain ATCC BAA-895 / CDC 4225-83 / SGSC4696).